The chain runs to 194 residues: tRNA (guanine-N(1)-)-methyltransferase (194 aa).

Residues Gly-78 and Ile-97–Leu-102 each bind S-adenosyl-L-methionine.

It belongs to the RNA methyltransferase TrmD family. Homodimer.

The protein resides in the cytoplasm. It carries out the reaction guanosine(37) in tRNA + S-adenosyl-L-methionine = N(1)-methylguanosine(37) in tRNA + S-adenosyl-L-homocysteine + H(+). Specifically methylates guanosine-37 in various tRNAs. This is tRNA (guanine-N(1)-)-methyltransferase from Mycoplasma mobile (strain ATCC 43663 / 163K / NCTC 11711) (Mesomycoplasma mobile).